Consider the following 311-residue polypeptide: Sensor histidine kinase YcbM (311 aa).

The chain crosses the membrane as a helical span at residues 1–21 (MTVLWVAAVIALACLNVIQFI). Topologically, residues 22–311 (MKKKRDGNLA…FTITLKRMTY (290 aa)) are cytoplasmic. In terms of domain architecture, Histidine kinase spans 92–310 (NMSHDLKTPL…AFTITLKRMT (219 aa)). A Phosphohistidine; by autocatalysis modification is found at His-95.

The protein resides in the cell membrane. It carries out the reaction ATP + protein L-histidine = ADP + protein N-phospho-L-histidine.. Member of the two-component regulatory system YcbM/YcbL. Probably activates YcbL by phosphorylation. This chain is Sensor histidine kinase YcbM (ycbM), found in Bacillus subtilis (strain 168).